We begin with the raw amino-acid sequence, 267 residues long: Glucosamine-6-phosphate deaminase (267 aa).

The active-site Proton acceptor; for enolization step is the Asp-72. Asp-141 functions as the For ring-opening step in the catalytic mechanism. The Proton acceptor; for ring-opening step role is filled by His-143. Glu-148 serves as the catalytic For ring-opening step.

Belongs to the glucosamine/galactosamine-6-phosphate isomerase family. NagB subfamily. As to quaternary structure, homohexamer.

The catalysed reaction is alpha-D-glucosamine 6-phosphate + H2O = beta-D-fructose 6-phosphate + NH4(+). It participates in amino-sugar metabolism; N-acetylneuraminate degradation; D-fructose 6-phosphate from N-acetylneuraminate: step 5/5. With respect to regulation, allosterically activated by N-acetylglucosamine 6-phosphate (GlcNAc6P). In terms of biological role, catalyzes the reversible isomerization-deamination of glucosamine 6-phosphate (GlcN6P) to form fructose 6-phosphate (Fru6P) and ammonium ion. The protein is Glucosamine-6-phosphate deaminase of Actinobacillus pleuropneumoniae serotype 3 (strain JL03).